Reading from the N-terminus, the 445-residue chain is GRAM domain-containing protein 2B (445 aa).

The residue at position 1 (methionine 1) is an N-acetylmethionine. The interval 1–118 (MVKKRLSSSD…ERKKSSSSSQ (118 aa)) is disordered. Composition is skewed to polar residues over residues 18-44 (PSNS…SSEA) and 56-68 (KSPT…SSVE). Residues 82 to 93 (SKSSFDGSSLLS) are compositionally biased toward low complexity. Residues 94-112 (DKNDCKTESKTDSKTERKK) show a composition bias toward basic and acidic residues. The region spanning 123 to 190 (MHFHKLFLDV…FSVTLIKKTK (68 aa)) is the GRAM domain. Polar residues predominate over residues 233-246 (TSVGNSPNPSSAEN). Residues 233–252 (TSVGNSPNPSSAENSFRADR) are disordered. Serine 238, serine 255, and serine 265 each carry phosphoserine. The disordered stretch occupies residues 277–331 (DLEGYSSSGSQTPESENSRDFHVTESQTVLNVTKGETKPPRTDAHGSRAPDGKAK). Residues 281–291 (YSSSGSQTPES) are compositionally biased toward polar residues. Positions 311–330 (GETKPPRTDAHGSRAPDGKA) are enriched in basic and acidic residues.

This chain is GRAM domain-containing protein 2B (Gramd2b), found in Mus musculus (Mouse).